A 264-amino-acid polypeptide reads, in one-letter code: tRNA pseudouridine synthase A (264 aa).

Catalysis depends on aspartate 51, which acts as the Nucleophile. A substrate-binding site is contributed by tyrosine 109.

The protein belongs to the tRNA pseudouridine synthase TruA family. In terms of assembly, homodimer.

It catalyses the reaction uridine(38/39/40) in tRNA = pseudouridine(38/39/40) in tRNA. Its function is as follows. Formation of pseudouridine at positions 38, 39 and 40 in the anticodon stem and loop of transfer RNAs. This is tRNA pseudouridine synthase A from Polaromonas naphthalenivorans (strain CJ2).